The chain runs to 653 residues: Macrolide export ATP-binding/permease protein MacB (653 aa).

The ABC transporter domain occupies 6–244 (LALSHICREF…AAASLPADKP (239 aa)). 42-49 (GSSGSGKS) contributes to the ATP binding site. 4 helical membrane-spanning segments follow: residues 277–297 (FLTMLGIIIGIAAVSSVVALG), 526–546 (LAFLVAAIAVISLVVGGIGVM), 587–607 (LGGIAGILIAVALGALLNLLL), and 617–637 (FSIGAAFLTSTAIGIFFGYFP).

It belongs to the ABC transporter superfamily. Macrolide exporter (TC 3.A.1.122) family. As to quaternary structure, homodimer.

The protein localises to the cell inner membrane. Functionally, non-canonical ABC transporter that contains transmembrane domains (TMD), which form a pore in the inner membrane, and an ATP-binding domain (NBD), which is responsible for energy generation. Confers resistance against macrolides. This chain is Macrolide export ATP-binding/permease protein MacB, found in Bradyrhizobium diazoefficiens (strain JCM 10833 / BCRC 13528 / IAM 13628 / NBRC 14792 / USDA 110).